Reading from the N-terminus, the 678-residue chain is THO complex subunit 5 homolog A (678 aa).

Disordered regions lie at residues 1–35 and 294–329; these read MASD…YSEE and ALFK…VQLD. Residues 7–10 carry the Nuclear localization signal motif; it reads KKRK. A compositionally biased stretch (basic and acidic residues) spans 14–35; sequence NRNEDVKRGRHEDQEGRYYSEE. Residues 301–314 are compositionally biased toward acidic residues; sequence DSQDDESDSDAEEE.

It belongs to the THOC5 family. In terms of assembly, component of the THO subcomplex, which is composed of thoc1, thoc2, thoc3, thoc5, thoc6 and thoc7. Component of the transcription/export (TREX) complex at least composed of alyref/thoc4, ddx39b, sarnp/cip29, chtop and the THO subcomplex. Interacts with thoc7.

It localises to the nucleus. The protein localises to the nucleus speckle. It is found in the cytoplasm. In terms of biological role, component of the THO subcomplex of the TREX complex which is thought to couple mRNA transcription, processing and nuclear export, and which specifically associates with spliced mRNA and not with unspliced pre-mRNA. Plays a key structural role in the oligomerization of the THO-ddx39b complex. TREX is recruited to spliced mRNAs by a transcription-independent mechanism, binds to mRNA upstream of the exon-junction complex (EJC) and is recruited in a splicing- and cap-dependent manner to a region near the 5' end of the mRNA where it functions in mRNA export to the cytoplasm via the TAP/NXF1 pathway. May be involved in cell differentiation. The sequence is that of THO complex subunit 5 homolog A (thoc5-a) from Xenopus laevis (African clawed frog).